Reading from the N-terminus, the 713-residue chain is Mitochondrial intermediate peptidase (713 aa).

Residues 1–35 (MLCVGRLGGLGARAAALPPRRAGRGSLEAGIRARR) constitute a mitochondrion transit peptide. At Lys126 the chain carries N6-acetyllysine. Zn(2+) is bound at residue His495. Glu496 is a catalytic residue. Zn(2+)-binding residues include His499 and His502.

It belongs to the peptidase M3 family. In terms of assembly, monomer. Zn(2+) serves as cofactor.

Its subcellular location is the mitochondrion matrix. It catalyses the reaction Release of an N-terminal octapeptide as second stage of processing of some proteins imported into the mitochondrion.. With respect to regulation, activity is divalent cation-dependent. It is stimulated by manganese, magnesium or calcium ions and reversibly inhibited by zinc, cobalt and iron. Functionally, cleaves proteins, imported into the mitochondrion, to their mature size. This Homo sapiens (Human) protein is Mitochondrial intermediate peptidase (MIPEP).